Reading from the N-terminus, the 179-residue chain is Large ribosomal subunit protein uL5 (179 aa).

The protein belongs to the universal ribosomal protein uL5 family. Part of the 50S ribosomal subunit; part of the 5S rRNA/L5/L18/L25 subcomplex. Contacts the 5S rRNA and the P site tRNA. Forms a bridge to the 30S subunit in the 70S ribosome.

In terms of biological role, this is one of the proteins that bind and probably mediate the attachment of the 5S RNA into the large ribosomal subunit, where it forms part of the central protuberance. In the 70S ribosome it contacts protein S13 of the 30S subunit (bridge B1b), connecting the 2 subunits; this bridge is implicated in subunit movement. Contacts the P site tRNA; the 5S rRNA and some of its associated proteins might help stabilize positioning of ribosome-bound tRNAs. This is Large ribosomal subunit protein uL5 from Yersinia enterocolitica serotype O:8 / biotype 1B (strain NCTC 13174 / 8081).